Reading from the N-terminus, the 644-residue chain is DNA mismatch repair protein MutL (644 aa).

Disordered regions lie at residues 338–390 (RPNA…ERPA) and 416–445 (QPQEAAEEAAGTPAPPASSSPAMAETDDTQ). Composition is skewed to low complexity over residues 349 to 366 (EATPSTDATTATAAEASA) and 416 to 427 (QPQEAAEEAAGT).

Belongs to the DNA mismatch repair MutL/HexB family.

This protein is involved in the repair of mismatches in DNA. It is required for dam-dependent methyl-directed DNA mismatch repair. May act as a 'molecular matchmaker', a protein that promotes the formation of a stable complex between two or more DNA-binding proteins in an ATP-dependent manner without itself being part of a final effector complex. This chain is DNA mismatch repair protein MutL, found in Chromohalobacter salexigens (strain ATCC BAA-138 / DSM 3043 / CIP 106854 / NCIMB 13768 / 1H11).